The primary structure comprises 1367 residues: DNA-directed RNA polymerase subunit beta' (1367 aa).

Residues 1 to 34 are disordered; that stretch reads MTSTSPKSRKSSSKRKGSKKKAARSKNVIPPLSK. Residues 7 to 24 show a composition bias toward basic residues; the sequence is KSRKSSSKRKGSKKKAAR. Residues C250, C317, C324, and C327 each coordinate Zn(2+). A disordered region spans residues 1306–1367; it reads SVLDDPSDAD…LQEEGLLSDE (62 aa). Positions 1355–1367 are enriched in low complexity; the sequence is LEGLQEEGLLSDE.

Belongs to the RNA polymerase beta' chain family. RpoC2 subfamily. As to quaternary structure, in cyanobacteria the RNAP catalytic core is composed of 2 alpha, 1 beta, 1 beta', 1 gamma and 1 omega subunit. When a sigma factor is associated with the core the holoenzyme is formed, which can initiate transcription. Zn(2+) is required as a cofactor.

It catalyses the reaction RNA(n) + a ribonucleoside 5'-triphosphate = RNA(n+1) + diphosphate. Its function is as follows. DNA-dependent RNA polymerase catalyzes the transcription of DNA into RNA using the four ribonucleoside triphosphates as substrates. The chain is DNA-directed RNA polymerase subunit beta' from Prochlorococcus marinus (strain SARG / CCMP1375 / SS120).